The chain runs to 644 residues: Macrolide export ATP-binding/permease protein MacB (644 aa).

Positions 6–244 (LELDGVWRRF…SQATEAQPDG (239 aa)) constitute an ABC transporter domain. 42–49 (GASGSGKS) contributes to the ATP binding site. A run of 5 helical transmembrane segments spans residues 271-291 (ALTM…IAIG), 415-435 (EAVG…GVVA), 517-537 (LSLL…IGVM), 574-594 (LVCL…SFVF), and 609-629 (VIAL…FLPA).

This sequence belongs to the ABC transporter superfamily. Macrolide exporter (TC 3.A.1.122) family. In terms of assembly, homodimer.

It is found in the cell inner membrane. In terms of biological role, non-canonical ABC transporter that contains transmembrane domains (TMD), which form a pore in the inner membrane, and an ATP-binding domain (NBD), which is responsible for energy generation. Confers resistance against macrolides. The sequence is that of Macrolide export ATP-binding/permease protein MacB from Chromobacterium violaceum (strain ATCC 12472 / DSM 30191 / JCM 1249 / CCUG 213 / NBRC 12614 / NCIMB 9131 / NCTC 9757 / MK).